Here is an 88-residue protein sequence, read N- to C-terminus: Small ribosomal subunit protein bS20 (88 aa).

The interval 1–21 (MANSAQAKKRARQNVKARKHN) is disordered. The span at 7-21 (AKKRARQNVKARKHN) shows a compositional bias: basic residues.

It belongs to the bacterial ribosomal protein bS20 family.

Functionally, binds directly to 16S ribosomal RNA. The chain is Small ribosomal subunit protein bS20 from Acinetobacter baumannii (strain AB307-0294).